The primary structure comprises 625 residues: Enolase 4 (625 aa).

Residues 184–226 (YSTVPTPLPPVPPPPPPPPPTKKKGQKPGRKDTITEKPIAPAE) form a disordered region. The span at 189–203 (TPLPPVPPPPPPPPP) shows a compositional bias: pro residues. Val-300 contributes to the substrate binding site. Residues 331–350 (PSPPKAETKKGHDGSKRGQQ) are disordered. Over residues 336–346 (AETKKGHDGSK) the composition is skewed to basic and acidic residues. Asn-497 functions as the Proton acceptor in the catalytic mechanism. Gly-548 contributes to the substrate binding site. A disordered region spans residues 604–625 (PLVPTFPTQGVEESAETGASSG).

The protein belongs to the enolase family. Interacts with ENO1 and AKAP4. Post-translationally, synthesized as an approximately 70-kDa precursor, which then undergoes proteolytic cleavage to an approximately 60-kDa enzyme; HOATZ associates directly or indirectly with ENO4 to mediate this process before its transport to mature flagella.

It carries out the reaction (2R)-2-phosphoglycerate = phosphoenolpyruvate + H2O. The protein operates within carbohydrate degradation; glycolysis; pyruvate from D-glyceraldehyde 3-phosphate: step 4/5. Functionally, may be required for sperm motility and function. In Homo sapiens (Human), this protein is Enolase 4.